Here is a 200-residue protein sequence, read N- to C-terminus: Nascent polypeptide-associated complex subunit alpha (200 aa).

A compositionally biased stretch (basic and acidic residues) spans Met-1–Val-19. Disordered regions lie at residues Met-1–Glu-52 and Gln-120–Asp-165. The span at Glu-20–Ala-34 shows a compositional bias: acidic residues. The region spanning Ser-49–Ala-114 is the NAC-A/B domain. Positions Ala-127–Ala-143 are enriched in basic and acidic residues. Positions Lys-144–Gly-160 are enriched in acidic residues. The 40-residue stretch at Ile-161–Val-200 folds into the UBA domain.

This sequence belongs to the NAC-alpha family. Part of the nascent polypeptide-associated complex (NAC), consisting of EGD2 and EGD1. NAC associates with ribosomes via EGD1.

The protein localises to the cytoplasm. The protein resides in the nucleus. Component of the nascent polypeptide-associated complex (NAC), a dynamic component of the ribosomal exit tunnel, protecting the emerging polypeptides from interaction with other cytoplasmic proteins to ensure appropriate nascent protein targeting. The NAC complex also promotes mitochondrial protein import by enhancing productive ribosome interactions with the outer mitochondrial membrane and blocks the inappropriate interaction of ribosomes translating non-secretory nascent polypeptides with translocation sites in the membrane of the endoplasmic reticulum. EGD2 may also be involved in transcription regulation. The polypeptide is Nascent polypeptide-associated complex subunit alpha (EGD2) (Chaetomium globosum (strain ATCC 6205 / CBS 148.51 / DSM 1962 / NBRC 6347 / NRRL 1970) (Soil fungus)).